Here is a 407-residue protein sequence, read N- to C-terminus: uncharacterized protein (407 aa).

Disordered stretches follow at residues 1–62 and 350–379; these read MTGR…NGDP and SVTPAAAAPPGVPKPEHGEELEADPWKPSS. A compositionally biased stretch (basic and acidic residues) spans 17-30; it reads PVEKMPRFQREHGA.

This is an uncharacterized protein from Ictaluridae (bullhead catfishes).